The chain runs to 420 residues: MTLTIKPSEIFGSIYIQMSKSDAHRALIASSLAKTPSIIKRWIDNVSVDVEVTKNAVSNFADLEIIDDNLKVFPKKEYKKELVIDVKESGSSLRFLIPIMSAFGITCTFTGSKKLFSRPIDVYKKIWKEEGLEFIHSEDSIKISGQLKASNFKVLGNLSSQFLSGLLFALPLLDGNSNIIIDGELESEPYVMMTLKTLKAANIETLRHDNNIIEVYGNQEYSGIDYEVESDWSHAAFFAAAGALGGETTLYGLNKYSIQGDKEILNILKFMGASVSYNDDNSITIKKTNRLNALDIDMSDIPDLGPIITTLAATAKGRTRLYNAGRLRYKESDRMNDLMDSFSRIGANIEVSEDEILIEGVERLKGGNTTSHNDHRIAMALAVASAVSDNDIIIDDAESINKSSFNFIEQFRSIGAKVVS.

Lys20, Ser21, and Arg25 together coordinate 3-phosphoshikimate. Lys20 lines the phosphoenolpyruvate pocket. Phosphoenolpyruvate contacts are provided by Gly90 and Arg118. Ser159, Ser160, Gln161, Ser187, Asp303, and Lys330 together coordinate 3-phosphoshikimate. Residue Gln161 coordinates phosphoenolpyruvate. The active-site Proton acceptor is the Asp303. Residues Arg334, Arg376, and Lys402 each coordinate phosphoenolpyruvate.

This sequence belongs to the EPSP synthase family. As to quaternary structure, monomer.

It localises to the cytoplasm. It catalyses the reaction 3-phosphoshikimate + phosphoenolpyruvate = 5-O-(1-carboxyvinyl)-3-phosphoshikimate + phosphate. It functions in the pathway metabolic intermediate biosynthesis; chorismate biosynthesis; chorismate from D-erythrose 4-phosphate and phosphoenolpyruvate: step 6/7. Functionally, catalyzes the transfer of the enolpyruvyl moiety of phosphoenolpyruvate (PEP) to the 5-hydroxyl of shikimate-3-phosphate (S3P) to produce enolpyruvyl shikimate-3-phosphate and inorganic phosphate. The protein is 3-phosphoshikimate 1-carboxyvinyltransferase of Brachyspira hyodysenteriae (strain ATCC 49526 / WA1).